The sequence spans 134 residues: Putative oxidoreductase CatD (134 aa).

4 consecutive transmembrane segments (helical) span residues 5-25 (FEIG…VHGL), 46-66 (FMAY…FFGL), 70-90 (IVGV…KLKA), and 91-111 (PFMG…HLAL).

This sequence belongs to the DoxX family.

It is found in the cell membrane. Functionally, essential for growth and viability in the presence of catechol and probably involved in the detoxification of catechol. This Bacillus subtilis (strain 168) protein is Putative oxidoreductase CatD (catD).